Here is a 77-residue protein sequence, read N- to C-terminus: NADH-ubiquinone oxidoreductase chain 4L (77 aa).

Helical transmembrane passes span 18 to 38 (LMFILISLEFIVMSLFILFSG) and 44 to 64 (MFFYFMCFSVVSSVLGMVVMV).

It belongs to the complex I subunit 4L family.

It is found in the mitochondrion membrane. It carries out the reaction a ubiquinone + NADH + 5 H(+)(in) = a ubiquinol + NAD(+) + 4 H(+)(out). In terms of biological role, core subunit of the mitochondrial membrane respiratory chain NADH dehydrogenase (Complex I) that is believed to belong to the minimal assembly required for catalysis. Complex I functions in the transfer of electrons from NADH to the respiratory chain. The immediate electron acceptor for the enzyme is believed to be ubiquinone. The protein is NADH-ubiquinone oxidoreductase chain 4L (ND4L) of Ascaris suum (Pig roundworm).